A 933-amino-acid polypeptide reads, in one-letter code: Dual 3',5'-cyclic-AMP and -GMP phosphodiesterase 11A (933 aa).

The disordered stretch occupies residues 42–121 (HTSGQGASSL…LQRRASQKEL (80 aa)). Ser162, Ser163, and Ser239 each carry phosphoserine. 2 consecutive GAF domains span residues 217 to 370 (DLTS…GIAI) and 402 to 558 (DLEK…GLGI). Residue Ser424 participates in 3',5'-cyclic GMP binding. The 325-residue stretch at 588 to 912 (SKAEVDKFKA…RKWEELHQKR (325 aa)) folds into the PDEase domain. Residue His664 is the Proton donor of the active site. The a divalent metal cation site is built by His668, His704, Asp705, and Asp816. The segment at 913 to 933 (LQVSAASPDPASPMVAGEDRL) is disordered.

It belongs to the cyclic nucleotide phosphodiesterase family. A divalent metal cation serves as cofactor. As to expression, expressed in testis and developing spermatoza.

It localises to the cytoplasm. It is found in the cytosol. It catalyses the reaction 3',5'-cyclic GMP + H2O = GMP + H(+). It carries out the reaction 3',5'-cyclic AMP + H2O = AMP + H(+). Its activity is regulated as follows. Inhibited by 3-isobutyl-1-methylxanthine (IBMX), zaprinast and dipyridamole. cGMP acts as an allosteric activator. In terms of biological role, plays a role in signal transduction by regulating the intracellular concentration of cyclic nucleotides cAMP and cGMP. Catalyzes the hydrolysis of both cAMP and cGMP to 5'-AMP and 5'-GMP, respectively. The sequence is that of Dual 3',5'-cyclic-AMP and -GMP phosphodiesterase 11A (Pde11a) from Mus musculus (Mouse).